The primary structure comprises 465 residues: G1/S-specific cyclin CLN3 (465 aa).

The 128-residue stretch at 44 to 171 (EMLHHLLSVE…HILKSLEWVV (128 aa)) folds into the Cyclin N-terminal domain.

This sequence belongs to the cyclin family. In terms of assembly, interacts with CDC28 and SLA1. Hyperphosphorylated. GRR1 preferentially mediates the degradation of hyperphosphorylated CLN3.

G1/S-specific cyclin essential for the control of the cell cycle at the G1/S (start) transition. CLN3 may be an upstream activator of the G1 cyclins which directly catalyze start. Required for budding and for cell cycle progression and morphogenesis in environment-induced hyphae. Degradation is mediated by GRR1. Through binding to CDC28, controls the phosphorylation of SLA1 which regulates cortical actin patch dynamics. The protein is G1/S-specific cyclin CLN3 (CLN3) of Candida albicans (strain SC5314 / ATCC MYA-2876) (Yeast).